The sequence spans 242 residues: 1-(5-phosphoribosyl)-5-[(5-phosphoribosylamino)methylideneamino] imidazole-4-carboxamide isomerase (242 aa).

The active-site Proton acceptor is the Asp-8. Residue Asp-129 is the Proton donor of the active site.

The protein belongs to the HisA/HisF family.

It localises to the cytoplasm. The enzyme catalyses 1-(5-phospho-beta-D-ribosyl)-5-[(5-phospho-beta-D-ribosylamino)methylideneamino]imidazole-4-carboxamide = 5-[(5-phospho-1-deoxy-D-ribulos-1-ylimino)methylamino]-1-(5-phospho-beta-D-ribosyl)imidazole-4-carboxamide. It functions in the pathway amino-acid biosynthesis; L-histidine biosynthesis; L-histidine from 5-phospho-alpha-D-ribose 1-diphosphate: step 4/9. The protein is 1-(5-phosphoribosyl)-5-[(5-phosphoribosylamino)methylideneamino] imidazole-4-carboxamide isomerase of Erythrobacter litoralis (strain HTCC2594).